We begin with the raw amino-acid sequence, 393 residues long: Telomeric repeat-binding factor 2-interacting protein 1 (393 aa).

Residue Ala2 is modified to N-acetylalanine. A phosphoserine mark is found at Ser36 and Ser43. The BRCT domain occupies 78–101; the sequence is FISTQYILDCVDRNEKLDLEAYRL. The segment at 104–132 is disordered; the sequence is TEQASDPKPGASTEGSTEPEPQPLTGRIA. Lys111 participates in a covalent cross-link: Glycyl lysine isopeptide (Lys-Gly) (interchain with G-Cter in SUMO2). One can recognise a Myb-like domain in the interval 125-185; sequence QPLTGRIAYT…SLKDRYLKHL (61 aa). Phosphoserine is present on residues Ser151 and Ser153. Lys191 is covalently cross-linked (Glycyl lysine isopeptide (Lys-Gly) (interchain with G-Cter in SUMO2)). The segment at 193–304 is disordered; the sequence is LLGNAPVSPS…EEEPKVSTQE (112 aa). 2 positions are modified to phosphoserine: Ser200 and Ser203. Residues Lys205, Lys209, and Lys237 each participate in a glycyl lysine isopeptide (Lys-Gly) (interchain with G-Cter in SUMO2) cross-link. Basic and acidic residues predominate over residues 223–252; that stretch reads QNKRAPDLPEEECVKGEIKENGEADNKLFE. Acidic residues predominate over residues 282–297; it reads TPEEDSETQPDEEEEE. A Glycyl lysine isopeptide (Lys-Gly) (interchain with G-Cter in SUMO2) cross-link involves residue Lys366. The Nuclear localization signal motif lies at 377-393; the sequence is KKFGAQNVARRIEFRKK.

This sequence belongs to the RAP1 family. In terms of assembly, homodimer. Component of the shelterin complex (telosome) composed of TERF1, TERF2, TINF2, TERF2IP ACD and POT1. Binds to TERF2 (but not TERF1) with its C-terminus. Interacts with SLX4/BTBD12. Interacts with TERF2; the interaction is direct. Does not interact with TERF1. Associates with the I-kappa-B-kinase (IKK) core complex, composed of CHUK, IKBKB and IKBKG.

Its subcellular location is the nucleus. The protein localises to the cytoplasm. The protein resides in the chromosome. It localises to the telomere. Its function is as follows. Acts both as a regulator of telomere function and as a transcription regulator. Involved in the regulation of telomere length and protection as a component of the shelterin complex (telosome). In contrast to other components of the shelterin complex, it is dispensible for telomere capping and does not participate in the protection of telomeres against non-homologous end-joining (NHEJ)-mediated repair. Instead, it is required to negatively regulate telomere recombination and is essential for repressing homology-directed repair (HDR), which can affect telomere length. Does not bind DNA directly: recruited to telomeric double-stranded 5'-TTAGGG-3' repeats via its interaction with TERF2. Independently of its function in telomeres, also acts as a transcription regulator: recruited to extratelomeric 5'-TTAGGG-3' sites via its association with TERF2 or other factors, and regulates gene expression. When cytoplasmic, associates with the I-kappa-B-kinase (IKK) complex and acts as a regulator of the NF-kappa-B signaling by promoting IKK-mediated phosphorylation of RELA/p65, leading to activate expression of NF-kappa-B target genes. This is Telomeric repeat-binding factor 2-interacting protein 1 (Terf2ip) from Mus musculus (Mouse).